The chain runs to 668 residues: Bestrophin-3 (668 aa).

At 1-31 (MTVTYSSKVANATFFGFHRLLLKWRGSIYKL) the chain is on the cytoplasmic side. Ala10 contacts Ca(2+). The chain crosses the membrane as a helical span at residues 32-51 (LYREFIVFAVLYTAISLVYR). Topologically, residues 52–60 (LLLTGVQKR) are extracellular. The helical transmembrane segment at 61-82 (YFEKLSIYCDRYAEQIPVTFVL) threads the bilayer. Over 83 to 237 (GFYVTLVVNR…DWVGIPLVYT (155 aa)) the chain is Cytoplasmic. A helical transmembrane segment spans residues 238–255 (QVVTLAVYTFFFACLIGR). The Extracellular portion of the chain corresponds to 256–274 (QFLDPTKGYAGHDLDLYIP). Residues 275–288 (IFTLLQFFFYAGWL) form a helical membrane-spanning segment. Over 289–668 (KVAEQLINPF…LNKETEESPK (380 aa)) the chain is Cytoplasmic. Positions 293, 296, 301, and 304 each coordinate Ca(2+). Disordered stretches follow at residues 400–454 (SAHE…KKSC), 473–493 (RETS…VRTS), and 532–570 (TGVQ…VSAS). Residues 425 to 436 (PRDDLSPARDLL) show a composition bias toward basic and acidic residues. Over residues 475–489 (TSQTSTLQSLTPQSS) the composition is skewed to low complexity. The segment covering 532 to 545 (TGVQPSKTEQQQGP) has biased composition (polar residues).

This sequence belongs to the anion channel-forming bestrophin (TC 1.A.46) family. Calcium-sensitive chloride channel subfamily. In terms of tissue distribution, present in skeletal muscle and weakly in brain, spinal cord, bone marrow and retina.

It localises to the cell membrane. The enzyme catalyses chloride(in) = chloride(out). Functionally, ligand-gated anion channel that allows the movement of chloride monoatomic anions across cell membranes when activated by calcium (Ca2+). This chain is Bestrophin-3, found in Homo sapiens (Human).